Consider the following 822-residue polypeptide: DNA-directed RNA polymerase subunit beta N-terminal section (822 aa).

The interval glutamate 376–glycine 408 is disordered. The segment covering serine 383–serine 393 has biased composition (low complexity).

It belongs to the RNA polymerase beta chain family. As to quaternary structure, in plastids the minimal PEP RNA polymerase catalytic core is composed of four subunits: alpha, beta, beta', and beta''. When a (nuclear-encoded) sigma factor is associated with the core the holoenzyme is formed, which can initiate transcription.

It is found in the plastid. The protein localises to the chloroplast. The enzyme catalyses RNA(n) + a ribonucleoside 5'-triphosphate = RNA(n+1) + diphosphate. Its function is as follows. DNA-dependent RNA polymerase catalyzes the transcription of DNA into RNA using the four ribonucleoside triphosphates as substrates. This Chlamydomonas reinhardtii (Chlamydomonas smithii) protein is DNA-directed RNA polymerase subunit beta N-terminal section (rpoB1).